The sequence spans 147 residues: Hemoglobin subunit beta (147 aa).

The residue at position 2 (serine 2) is an N-acetylserine. In terms of domain architecture, Globin spans 3–147; it reads FLSAEEKNLV…VASALAHRYH (145 aa). Serine 45 is subject to Phosphoserine. Lysine 60 is subject to N6-acetyllysine. Histidine 64 contributes to the heme b binding site. N6-acetyllysine is present on lysine 83. Residue histidine 93 participates in heme b binding. Position 94 is an S-nitrosocysteine (cysteine 94).

Belongs to the globin family. In terms of assembly, heterotetramer of two alpha chains and two beta chains. In terms of tissue distribution, red blood cells.

Its function is as follows. Involved in oxygen transport from the lung to the various peripheral tissues. This is Hemoglobin subunit beta (HBB) from Panthera pardus orientalis (Amur leopard).